The primary structure comprises 187 residues: Large ribosomal subunit protein uL5 (187 aa).

This sequence belongs to the universal ribosomal protein uL5 family. As to quaternary structure, part of the 50S ribosomal subunit; part of the 5S rRNA/L5/L18/L25 subcomplex. Contacts the 5S rRNA and the P site tRNA. Forms a bridge to the 30S subunit in the 70S ribosome.

Functionally, this is one of the proteins that bind and probably mediate the attachment of the 5S RNA into the large ribosomal subunit, where it forms part of the central protuberance. In the 70S ribosome it contacts protein S13 of the 30S subunit (bridge B1b), connecting the 2 subunits; this bridge is implicated in subunit movement. Contacts the P site tRNA; the 5S rRNA and some of its associated proteins might help stabilize positioning of ribosome-bound tRNAs. In Mycobacterium bovis (strain BCG / Tokyo 172 / ATCC 35737 / TMC 1019), this protein is Large ribosomal subunit protein uL5.